The primary structure comprises 72 residues: Translation initiation factor IF-1 (72 aa).

Positions methionine 1–lysine 72 constitute an S1-like domain.

This sequence belongs to the IF-1 family. As to quaternary structure, component of the 30S ribosomal translation pre-initiation complex which assembles on the 30S ribosome in the order IF-2 and IF-3, IF-1 and N-formylmethionyl-tRNA(fMet); mRNA recruitment can occur at any time during PIC assembly.

Its subcellular location is the cytoplasm. One of the essential components for the initiation of protein synthesis. Stabilizes the binding of IF-2 and IF-3 on the 30S subunit to which N-formylmethionyl-tRNA(fMet) subsequently binds. Helps modulate mRNA selection, yielding the 30S pre-initiation complex (PIC). Upon addition of the 50S ribosomal subunit IF-1, IF-2 and IF-3 are released leaving the mature 70S translation initiation complex. The protein is Translation initiation factor IF-1 of Ruegeria sp. (strain TM1040) (Silicibacter sp.).